A 105-amino-acid polypeptide reads, in one-letter code: Multidrug resistance protein EbrA (105 aa).

Helical transmembrane passes span 2–22 (LVGY…AAML), 35–55 (ALVV…LNHI), 57–77 (LSLS…VIGV), and 84–104 (LNAK…LLNW).

Belongs to the drug/metabolite transporter (DMT) superfamily. Small multidrug resistance (SMR) (TC 2.A.7.1) family. EbrA/EbrB subfamily. As to quaternary structure, the efflux pump is composed of EbrA and EbrB.

The protein localises to the cell membrane. Its function is as follows. Part of a multidrug efflux pump. Confers resistance to cationic lipophilic dyes such as ethidium bromide, acriflavine, pyronine Y and safranin O. The efflux is probably coupled to an influx of protons. The protein is Multidrug resistance protein EbrA (ebrA) of Bacillus atrophaeus.